The following is a 445-amino-acid chain: Putative MgpC-like protein MPN_464 (445 aa).

Residues 23–44 are disordered; that stretch reads STTVAVQKSDSSGSQGQGTTDN. The span at 31-43 shows a compositional bias: low complexity; it reads SDSSGSQGQGTTD.

The protein belongs to the MgpC family.

This Mycoplasma pneumoniae (strain ATCC 29342 / M129 / Subtype 1) (Mycoplasmoides pneumoniae) protein is Putative MgpC-like protein MPN_464.